The following is a 136-amino-acid chain: Galectin-7 (136 aa).

In terms of domain architecture, Galectin spans H6–F136. W70 to G76 lines the a beta-D-galactoside pocket.

Monomer. In terms of tissue distribution, mainly expressed in stratified squamous epithelium.

The protein resides in the cytoplasm. It localises to the nucleus. Its subcellular location is the secreted. Its function is as follows. Could be involved in cell-cell and/or cell-matrix interactions necessary for normal growth control. Pro-apoptotic protein that functions intracellularly upstream of JNK activation and cytochrome c release. In Homo sapiens (Human), this protein is Galectin-7 (LGALS7).